Consider the following 398-residue polypeptide: 1-deoxy-D-xylulose 5-phosphate reductoisomerase (398 aa).

The NADPH site is built by T10, G11, S12, I13, K37, N38, and N124. K125 lines the 1-deoxy-D-xylulose 5-phosphate pocket. E126 serves as a coordination point for NADPH. D150 is a Mn(2+) binding site. Residues S151, E152, S186, and H209 each coordinate 1-deoxy-D-xylulose 5-phosphate. E152 provides a ligand contact to Mn(2+). G215 contacts NADPH. 1-deoxy-D-xylulose 5-phosphate is bound by residues S222, N227, K228, and E231. E231 contacts Mn(2+).

It belongs to the DXR family. In terms of assembly, homodimer. It depends on Mg(2+) as a cofactor. Mn(2+) is required as a cofactor.

The catalysed reaction is 2-C-methyl-D-erythritol 4-phosphate + NADP(+) = 1-deoxy-D-xylulose 5-phosphate + NADPH + H(+). Its pathway is isoprenoid biosynthesis; isopentenyl diphosphate biosynthesis via DXP pathway; isopentenyl diphosphate from 1-deoxy-D-xylulose 5-phosphate: step 1/6. Catalyzes the NADPH-dependent rearrangement and reduction of 1-deoxy-D-xylulose-5-phosphate (DXP) to 2-C-methyl-D-erythritol 4-phosphate (MEP). The chain is 1-deoxy-D-xylulose 5-phosphate reductoisomerase from Buchnera aphidicola subsp. Schizaphis graminum (strain Sg).